A 709-amino-acid chain; its full sequence is Elongation factor G (709 aa).

Residues 9 to 295 (AKVRNIGIMA…AVVRYLPTPL (287 aa)) form the tr-type G domain. GTP contacts are provided by residues 18 to 25 (AHIDAGKT), 86 to 90 (DTPGH), and 140 to 143 (NKLD).

Belongs to the TRAFAC class translation factor GTPase superfamily. Classic translation factor GTPase family. EF-G/EF-2 subfamily.

The protein resides in the cytoplasm. Catalyzes the GTP-dependent ribosomal translocation step during translation elongation. During this step, the ribosome changes from the pre-translocational (PRE) to the post-translocational (POST) state as the newly formed A-site-bound peptidyl-tRNA and P-site-bound deacylated tRNA move to the P and E sites, respectively. Catalyzes the coordinated movement of the two tRNA molecules, the mRNA and conformational changes in the ribosome. The polypeptide is Elongation factor G (Streptomyces avermitilis (strain ATCC 31267 / DSM 46492 / JCM 5070 / NBRC 14893 / NCIMB 12804 / NRRL 8165 / MA-4680)).